We begin with the raw amino-acid sequence, 496 residues long: Protein RepR (496 aa).

A DNA-binding region spans residues 120 to 141 (SDILTTAIDLGFMPTLIIKSDK).

Essential for replication. This is Protein RepR (repR) from Streptococcus agalactiae.